The chain runs to 157 residues: MPRKGPVKKREILPDPVYNDKVVAKLINKVMYDGKKSIAQKIVYGAFDIIREKTGKDPLEVLEAALNNVMPVLEVRPRRVGGATYQVPIEVAPDRRLSLGIRWLVEYARERKDKRTMKEKLAAEIMDAANNTGGAVKKKEDTHRMAEANRAFAHYRW.

This sequence belongs to the universal ribosomal protein uS7 family. In terms of assembly, part of the 30S ribosomal subunit. Contacts proteins S9 and S11.

Functionally, one of the primary rRNA binding proteins, it binds directly to 16S rRNA where it nucleates assembly of the head domain of the 30S subunit. Is located at the subunit interface close to the decoding center, probably blocks exit of the E-site tRNA. This Caldicellulosiruptor bescii (strain ATCC BAA-1888 / DSM 6725 / KCTC 15123 / Z-1320) (Anaerocellum thermophilum) protein is Small ribosomal subunit protein uS7.